The primary structure comprises 253 residues: Imidazole glycerol phosphate synthase subunit HisF (253 aa).

Catalysis depends on residues Asp-11 and Asp-130.

This sequence belongs to the HisA/HisF family. In terms of assembly, heterodimer of HisH and HisF.

It localises to the cytoplasm. It catalyses the reaction 5-[(5-phospho-1-deoxy-D-ribulos-1-ylimino)methylamino]-1-(5-phospho-beta-D-ribosyl)imidazole-4-carboxamide + L-glutamine = D-erythro-1-(imidazol-4-yl)glycerol 3-phosphate + 5-amino-1-(5-phospho-beta-D-ribosyl)imidazole-4-carboxamide + L-glutamate + H(+). It functions in the pathway amino-acid biosynthesis; L-histidine biosynthesis; L-histidine from 5-phospho-alpha-D-ribose 1-diphosphate: step 5/9. In terms of biological role, IGPS catalyzes the conversion of PRFAR and glutamine to IGP, AICAR and glutamate. The HisF subunit catalyzes the cyclization activity that produces IGP and AICAR from PRFAR using the ammonia provided by the HisH subunit. In Roseobacter denitrificans (strain ATCC 33942 / OCh 114) (Erythrobacter sp. (strain OCh 114)), this protein is Imidazole glycerol phosphate synthase subunit HisF.